The primary structure comprises 160 residues: Cytochrome b6-f complex subunit 4 (160 aa).

Transmembrane regions (helical) follow at residues 36–56 (LLYV…ALAV), 95–115 (LLGV…PFIE), and 131–151 (TVFL…ALPL).

This sequence belongs to the cytochrome b family. PetD subfamily. As to quaternary structure, the 4 large subunits of the cytochrome b6-f complex are cytochrome b6, subunit IV (17 kDa polypeptide, PetD), cytochrome f and the Rieske protein, while the 4 small subunits are PetG, PetL, PetM and PetN. The complex functions as a dimer.

It is found in the cellular thylakoid membrane. In terms of biological role, component of the cytochrome b6-f complex, which mediates electron transfer between photosystem II (PSII) and photosystem I (PSI), cyclic electron flow around PSI, and state transitions. In Trichormus variabilis (strain ATCC 29413 / PCC 7937) (Anabaena variabilis), this protein is Cytochrome b6-f complex subunit 4.